We begin with the raw amino-acid sequence, 469 residues long: Citrate synthase, mitochondrial (469 aa).

The transit peptide at 1–30 directs the protein to the mitochondrion; the sequence is MSFLSVSRLAPKLLNSKNATYFLVAARNAS. Residues histidine 304 and histidine 350 contribute to the active site. Oxaloacetate is bound at residue arginine 359. The active site involves aspartate 405. The oxaloacetate site is built by arginine 431 and arginine 451.

This sequence belongs to the citrate synthase family. In terms of assembly, homodimer.

The protein localises to the mitochondrion matrix. It catalyses the reaction oxaloacetate + acetyl-CoA + H2O = citrate + CoA + H(+). It participates in carbohydrate metabolism; tricarboxylic acid cycle; isocitrate from oxaloacetate: step 1/2. Functionally, key enzyme of the Krebs tricarboxylic acid cycle which catalyzes the synthesis of citrate from acetyl coenzyme A and oxaloacetate. The chain is Citrate synthase, mitochondrial (cs) from Katsuwonus pelamis (Skipjack tuna).